Reading from the N-terminus, the 77-residue chain is Acyl carrier protein (77 aa).

In terms of domain architecture, Carrier spans 2 to 77 (ADALERVTKI…DAVNYINSKQ (76 aa)). Serine 37 is subject to O-(pantetheine 4'-phosphoryl)serine.

It belongs to the acyl carrier protein (ACP) family. 4'-phosphopantetheine is transferred from CoA to a specific serine of apo-ACP by AcpS. This modification is essential for activity because fatty acids are bound in thioester linkage to the sulfhydryl of the prosthetic group.

Its subcellular location is the cytoplasm. It participates in lipid metabolism; fatty acid biosynthesis. Carrier of the growing fatty acid chain in fatty acid biosynthesis. The polypeptide is Acyl carrier protein (Bacillus licheniformis (strain ATCC 14580 / DSM 13 / JCM 2505 / CCUG 7422 / NBRC 12200 / NCIMB 9375 / NCTC 10341 / NRRL NRS-1264 / Gibson 46)).